Reading from the N-terminus, the 79-residue chain is Small ribosomal subunit protein bS21 (79 aa).

2 stretches are compositionally biased toward basic residues: residues 47–59 and 69–79; these read RKQAAAVKRHLKK and GVGHRRKKSTT. Residues 47–79 are disordered; sequence RKQAAAVKRHLKKISRDVSSRRGVGHRRKKSTT.

This sequence belongs to the bacterial ribosomal protein bS21 family.

The chain is Small ribosomal subunit protein bS21 from Legionella pneumophila (strain Paris).